The sequence spans 171 residues: Transcriptional repressor NrdR (171 aa).

A zinc finger lies at 3–34 (CPFCGDPNTQVADTRENEGGEVVRRRRRCPKC). The ATP-cone domain occupies 49–139 (PHIVKRNGNR…VYRNFADVDE (91 aa)). Residues 148–171 (KARPKRNRPAEPPEPTSENDLFRS) form a disordered region.

The protein belongs to the NrdR family. Zn(2+) is required as a cofactor.

Its function is as follows. Negatively regulates transcription of bacterial ribonucleotide reductase nrd genes and operons by binding to NrdR-boxes. The polypeptide is Transcriptional repressor NrdR (Aromatoleum aromaticum (strain DSM 19018 / LMG 30748 / EbN1) (Azoarcus sp. (strain EbN1))).